The primary structure comprises 441 residues: Arginine biosynthesis bifunctional protein ArgJ, mitochondrial (441 aa).

The substrate site is built by T177, K203, T214, E303, N436, and S441. T214 acts as the Nucleophile in catalysis.

Belongs to the ArgJ family. As to quaternary structure, heterodimer of an alpha and a beta chain. Post-translationally, the alpha and beta chains are autoproteolytically processed from a single precursor protein within the mitochondrion.

It is found in the mitochondrion matrix. The catalysed reaction is N(2)-acetyl-L-ornithine + L-glutamate = N-acetyl-L-glutamate + L-ornithine. It carries out the reaction L-glutamate + acetyl-CoA = N-acetyl-L-glutamate + CoA + H(+). It participates in amino-acid biosynthesis; L-arginine biosynthesis; L-ornithine and N-acetyl-L-glutamate from L-glutamate and N(2)-acetyl-L-ornithine (cyclic): step 1/1. The protein operates within amino-acid biosynthesis; L-arginine biosynthesis; N(2)-acetyl-L-ornithine from L-glutamate: step 1/4. In terms of biological role, catalyzes two activities which are involved in the cyclic version of arginine biosynthesis: the synthesis of acetylglutamate from glutamate and acetyl-CoA, and of ornithine by transacetylation between acetylornithine and glutamate. The sequence is that of Arginine biosynthesis bifunctional protein ArgJ, mitochondrial from Debaryomyces hansenii (strain ATCC 36239 / CBS 767 / BCRC 21394 / JCM 1990 / NBRC 0083 / IGC 2968) (Yeast).